An 80-amino-acid polypeptide reads, in one-letter code: Inner kinetochore subunit MHF2 (80 aa).

Belongs to the CENP-X/MHF2 family. As to quaternary structure, the MHF histone-fold complex is a heterotetramer of 2 MHF1-MHF2 heterodimers. Together with MPH1/FANCM, forms the FANCM-MHF complex. Component of the inner kinetochore constitutive centromere-associated network (CCAN) (also known as central kinetochore CTF19 complex in yeast), which is composed of at least AME1, CHL4, CNN1, CTF3, CTF19, IML3, MCM16, MCM21, MCM22, MHF1, MHF2, MIF2, NKP1, NKP2, OKP1 and WIP1.

Functionally, DNA-binding component of a FANCM-MHF complex involved in DNA damage repair and genome maintenance. FANCM-MHF promotes gene conversion at blocked replication forks, probably by reversal of the stalled fork. Component of the kinetochore, a multiprotein complex that assembles on centromeric DNA and attaches chromosomes to spindle microtubules, mediating chromosome segregation and sister chromatid segregation during meiosis and mitosis. Component of the inner kinetochore constitutive centromere-associated network (CCAN), which serves as a structural platform for outer kinetochore assembly. In Saccharomyces cerevisiae (strain ATCC 204508 / S288c) (Baker's yeast), this protein is Inner kinetochore subunit MHF2.